Consider the following 119-residue polypeptide: Large ribosomal subunit protein uL18 (119 aa).

It belongs to the universal ribosomal protein uL18 family. As to quaternary structure, part of the 50S ribosomal subunit; part of the 5S rRNA/L5/L18/L25 subcomplex. Contacts the 5S and 23S rRNAs.

Functionally, this is one of the proteins that bind and probably mediate the attachment of the 5S RNA into the large ribosomal subunit, where it forms part of the central protuberance. This is Large ribosomal subunit protein uL18 from Clostridium beijerinckii (strain ATCC 51743 / NCIMB 8052) (Clostridium acetobutylicum).